The chain runs to 250 residues: Pyrroloquinoline-quinone synthase (250 aa).

Belongs to the PqqC family.

It catalyses the reaction 6-(2-amino-2-carboxyethyl)-7,8-dioxo-1,2,3,4,7,8-hexahydroquinoline-2,4-dicarboxylate + 3 O2 = pyrroloquinoline quinone + 2 H2O2 + 2 H2O + H(+). The protein operates within cofactor biosynthesis; pyrroloquinoline quinone biosynthesis. Ring cyclization and eight-electron oxidation of 3a-(2-amino-2-carboxyethyl)-4,5-dioxo-4,5,6,7,8,9-hexahydroquinoline-7,9-dicarboxylic-acid to PQQ. This Xanthomonas oryzae pv. oryzae (strain KACC10331 / KXO85) protein is Pyrroloquinoline-quinone synthase.